A 374-amino-acid chain; its full sequence is Inner membrane transport permease YhhJ (374 aa).

Topologically, residues methionine 1–lysine 22 are cytoplasmic. A helical transmembrane segment spans residues alanine 23 to threonine 43. Residues proline 44–aspartate 172 lie on the Periplasmic side of the membrane. In terms of domain architecture, ABC transmembrane type-2 spans asparagine 133–threonine 369. The chain crosses the membrane as a helical span at residues proline 173 to leucine 193. Residues threonine 194–glycine 229 are Cytoplasmic-facing. A helical membrane pass occupies residues leucine 230–valine 250. Residues proline 251–serine 255 are Periplasmic-facing. Residues isoleucine 256–phenylalanine 276 form a helical membrane-spanning segment. The Cytoplasmic segment spans residues methionine 277–serine 283. A helical transmembrane segment spans residues methionine 284–glycine 304. The Periplasmic portion of the chain corresponds to serine 305–glutamate 342. A helical membrane pass occupies residues isoleucine 343–leucine 363. The Cytoplasmic portion of the chain corresponds to leucine 364–alanine 374.

It belongs to the ABC-2 integral membrane protein family.

It localises to the cell inner membrane. In Escherichia coli (strain K12), this protein is Inner membrane transport permease YhhJ (yhhJ).